Here is a 244-residue protein sequence, read N- to C-terminus: 2,5-diamino-6-ribosylamino-4(3H)-pyrimidinone 5'-phosphate reductase (244 aa).

Residues T79, D83, V159, and 182–186 each bind NADP(+); that span reads GANVI.

Belongs to the HTP reductase family. As to quaternary structure, homodimer.

It carries out the reaction 2,5-diamino-6-(1-D-ribitylamino)pyrimidin-4(3H)-one 5'-phosphate + NADP(+) = 2,5-diamino-6-(1-D-ribosylamino)pyrimidin-4(3H)-one 5'-phosphate + NADPH + H(+). The enzyme catalyses 2,5-diamino-6-(1-D-ribitylamino)pyrimidin-4(3H)-one 5'-phosphate + NAD(+) = 2,5-diamino-6-(1-D-ribosylamino)pyrimidin-4(3H)-one 5'-phosphate + NADH + H(+). The protein operates within cofactor biosynthesis; riboflavin biosynthesis. In terms of biological role, catalyzes an early step in riboflavin biosynthesis, the NADPH-dependent reduction of the ribose side chain of 2,5-diamino-6-ribosylamino-4(3H)-pyrimidinone 5'-phosphate, yielding 2,5-diamino-6-ribitylamino-4(3H)-pyrimidinone 5'-phosphate. In Saccharomyces cerevisiae (strain ATCC 204508 / S288c) (Baker's yeast), this protein is 2,5-diamino-6-ribosylamino-4(3H)-pyrimidinone 5'-phosphate reductase (RIB7).